The primary structure comprises 193 residues: dTTP/UTP pyrophosphatase (193 aa).

The active-site Proton acceptor is aspartate 77.

This sequence belongs to the Maf family. YhdE subfamily. A divalent metal cation serves as cofactor.

The protein localises to the cytoplasm. The enzyme catalyses dTTP + H2O = dTMP + diphosphate + H(+). The catalysed reaction is UTP + H2O = UMP + diphosphate + H(+). In terms of biological role, nucleoside triphosphate pyrophosphatase that hydrolyzes dTTP and UTP. May have a dual role in cell division arrest and in preventing the incorporation of modified nucleotides into cellular nucleic acids. The chain is dTTP/UTP pyrophosphatase from Parabacteroides distasonis (strain ATCC 8503 / DSM 20701 / CIP 104284 / JCM 5825 / NCTC 11152).